A 1385-amino-acid chain; its full sequence is MEVLMAERANLVFHNKVIDGTAMKRLISRLIDHFGMAYTSHILDQVKTLGFQQATATSISLGIDDLLTISSKGWLVQDAEQQSLLLEKHHRYGNVHAVEKLRQSIEIWYATSEYLRQEMNPNFRMTDPSNPVHIMSFSGARGNVSQVHQLVGMRGLMSDPQGQMIDLPIQSNLREGLSLTEYTISCYGARKGVVDTAVRTSDAGYLTRRLVEVVQHVVVRRTDCGTIRGISISIRNGMTGRILIQTLIGRVLADDVYMGLRCIAARNQDIGIGLVNRFITSRAQPIYIRTPFTCRSTSWICRLCYGRSPTHGDLVELGEAVGIIAGQSIGEPGTQLTLRTFHTGGVFTGGTAEHVRAPFNGKIKFNEDLVHPTRTRHGHPAFLCYIDLYVTIESQDILHNVNIPPKSFILVQNDQYVESEQVIAEIRARTSTFSFKEKVRKHIYSDSEGEIHWSTDVYHVPEYTHGNVHLLPKTTHLWILSGGPGPCRRSIVPFSLHKDQDQMNLQSLSVEQRYISNLSVNNDRVRHKLFDLDPFWKKKGGVGYSGPDRILSNGHWDFIYPAILHENSNLLAKRRRNRFIISFQHDQEREKKLPPRSGIKIEIPINGILRRNSILAYFDDPRYRRSSSGITKYGTIEVDSIVKKDDLIEYRGAKELRPKYQMKVDPFFFIPEEVHILPGSSPIMVRNNSIIGVDTRITLNTRSRIGGLVRVERKKKRIELKIFSGDIHFPGETDKISRHSGILIPPETRKKNSKESKSKQLKNWIYVQRITPIKKKYFVSVRAVVIYEIADGIHLATLFPQDLLQERDNLQLRVVNYFLYGNGKPIRGISHKSIQLVRTCLVLNWDQDQNGSIEEVYASFVKVRANDLIRDFIRIDLVKSPISKRNDTAGSGLIPVNGSDRTNINPFCSKARIQSLSQHQGTVRTFLNRNKEGESFLVLSSSNCSRIGPFNGLKYHNLTKKESIQIKEDPMIPIRNSLGPFGTVPKIANFYSSYQLITHNEILLNKYLLLDNPKQTFEALKYYFMDENGIIYNPDPCSNIILNPFDSNWYFPHQDYCEETCTIISLGQFICENVCISKHGPRIKSGQVLIVHVDSLVIRSAKPHLATPGATVHGHYGEILYEGNTLVTFIYEKSRSGDITQGLPKVEQVLEVRSIDSISMNLEKRFEGWGERMTGILGIPWGFLIGAELTIAQSHFSLVNKIQRVYRSQGVQIHNRHIEIIVRQITSKVLVSEDGMSNVFSPGELIGLLRAERTGRALEEAICYRAVLLGITRASLNTQSFISEASFQETTRVLAKAALRGRIDWLKGLKENVVLGGMIPVGTGFKGLVHHSREHNNIPFEIQKKSRFEGEMRDILFPHRELFCSCLETNFHDTSEQSFMGLNDS.

4 residues coordinate Zn(2+): cysteine 224, cysteine 294, cysteine 301, and cysteine 304.

The protein belongs to the RNA polymerase beta' chain family. RpoC2 subfamily. In plastids the minimal PEP RNA polymerase catalytic core is composed of four subunits: alpha, beta, beta', and beta''. When a (nuclear-encoded) sigma factor is associated with the core the holoenzyme is formed, which can initiate transcription. Requires Zn(2+) as cofactor.

It localises to the plastid. It is found in the chloroplast. The enzyme catalyses RNA(n) + a ribonucleoside 5'-triphosphate = RNA(n+1) + diphosphate. In terms of biological role, DNA-dependent RNA polymerase catalyzes the transcription of DNA into RNA using the four ribonucleoside triphosphates as substrates. The sequence is that of DNA-directed RNA polymerase subunit beta'' from Illicium oligandrum (Star anise).